Consider the following 430-residue polypeptide: Pre-B-cell leukemia transcription factor 1 (430 aa).

Residues 1-40 are disordered; sequence MDEQPRLMHSHAGVGMAGHPGLSQHLQDGAGGTEGEGGRK. The 195-residue stretch at 38 to 232 folds into the PBC domain; sequence GRKQDIGDIL…VMILRSRFLD (195 aa). The segment at 45–124 is PBC-A; it reads DILQQIMTIT…EGVAGPEKGG (80 aa). The segment at 127–232 is PBC-B; sequence AAAAAAAAAS…VMILRSRFLD (106 aa). Positions 233 to 295 form a DNA-binding region, homeobox; TALE-type; it reads ARRKRRNFNK…NKRIRYKKNI (63 aa). Disordered regions lie at residues 317–338 and 395–430; these read SAHGSQANSPSTPNSAGSSSSF and SPQGISANGGWQDATTPSSVTSPTEGPGSVHSDTSN. Residues 323–338 show a composition bias toward low complexity; sequence ANSPSTPNSAGSSSSF. Over residues 407 to 418 the composition is skewed to polar residues; it reads DATTPSSVTSPT.

The protein belongs to the TALE/PBX homeobox family. Forms a heterodimer with MEIS1 which binds DNA. The PBX1-MEIS1 heterodimer binds a cAMP-responsive sequence in CYP17. It also binds a consensus region in the SOX3 promoter. PBX1 forms heterotrimers with MEIS1 and a number of HOX proteins including HOXA9, HOXD4, HOXD9 and HOXD10. Forms heterodimers with HOXA1, HOXA5, HOXB7 and HOXB8 which bind the 5'-TGATTGAT-3' consensus sequence. Also forms heterodimers with HOXA5, HOXB7, HOXB8, HOXC8 and HOXD4 which bind the 5'-ATCAATCAA-3' consensus sequence. Interacts with PBXIP1. Interacts with TLX1. Interacts with FOXC1. Interacts with MN1. In terms of assembly, interacts with MEIS2 isoform 4, SP1, SP3 and KLF4. As to quaternary structure, part of a PDX1:PBX1b:MEIS2B complex; PBX1b recruits MEIS2B to the complex. Expressed in the kidney. Expressed in the endothelial cells of the glomeruli and interstitium (at protein level). Expressed in all tissues except in cells of the B and T lineage. Expressed strongly in kidney and brain.

The protein resides in the nucleus. Functionally, transcription factor which binds the DNA sequence 5'-TGATTGAT-3' as part of a heterodimer with HOX proteins such as HOXA1, HOXA5, HOXB7 and HOXB8. Binds to the DNA sequence 5'-TGATTGAC-3' in complex with a nuclear factor which is not a class I HOX protein. Has also been shown to bind the DNA sequence 5'-ATCAATCAA-3' cooperatively with HOXA5, HOXB7, HOXB8, HOXC8 and HOXD4. Acts as a transcriptional activator of PF4 in complex with MEIS1. Also activates transcription of SOX3 in complex with MEIS1 by binding to the 5'-TGATTGAC-3' consensus sequence. In natural killer cells, binds to the NFIL3 promoter and acts as a transcriptional activator of NFIL3, promoting natural killer cell development. Plays a role in the cAMP-dependent regulation of CYP17A1 gene expression via its cAMP-regulatory sequence (CRS1). Probably in complex with MEIS2, involved in transcriptional regulation by KLF4. Acts as a transcriptional activator of NKX2-5 and a transcriptional repressor of CDKN2B. Together with NKX2-5, required for spleen development through a mechanism that involves CDKN2B repression. In terms of biological role, as part of a PDX1:PBX1b:MEIS2B complex in pancreatic acinar cells, is involved in the transcriptional activation of the ELA1 enhancer; the complex binds to the enhancer B element and cooperates with the transcription factor 1 complex (PTF1) bound to the enhancer A element. This Homo sapiens (Human) protein is Pre-B-cell leukemia transcription factor 1 (PBX1).